A 201-amino-acid chain; its full sequence is uncharacterized protein (201 aa).

Positions 1 to 25 (MYRAGVTLLVVAVVSLGRWDVVTMA) are cleaved as a signal peptide. The Extracellular segment spans residues 26–170 (AAIGIGWYEP…AYFRRSNHRA (145 aa)). N-linked (GlcNAc...) asparagine; by host glycans are attached at residues Asn46, Asn49, Asn55, Asn84, Asn95, Asn113, Asn122, Asn137, and Asn144. A helical transmembrane segment spans residues 171–191 (FMIVILTQVVFVVFIINASFI). The Cytoplasmic portion of the chain corresponds to 192–201 (WSWTFRRHKR).

Belongs to the HHV-5 UL120 protein family.

It localises to the host membrane. This is an uncharacterized protein from Homo sapiens (Human).